The sequence spans 674 residues: tRNA 5-methylaminomethyl-2-thiouridine biosynthesis bifunctional protein MnmC (674 aa).

The tract at residues 1–246 is tRNA (mnm(5)s(2)U34)-methyltransferase; sequence MFIMSSISHA…KREMIAGSLS (246 aa). Residues 272-674 are FAD-dependent cmnm(5)s(2)U34 oxidoreductase; sequence IGGGIASATL…RKGKALTQKV (403 aa).

This sequence in the N-terminal section; belongs to the methyltransferase superfamily. tRNA (mnm(5)s(2)U34)-methyltransferase family. The protein in the C-terminal section; belongs to the DAO family. FAD serves as cofactor.

It is found in the cytoplasm. It carries out the reaction 5-aminomethyl-2-thiouridine(34) in tRNA + S-adenosyl-L-methionine = 5-methylaminomethyl-2-thiouridine(34) in tRNA + S-adenosyl-L-homocysteine + H(+). Its function is as follows. Catalyzes the last two steps in the biosynthesis of 5-methylaminomethyl-2-thiouridine (mnm(5)s(2)U) at the wobble position (U34) in tRNA. Catalyzes the FAD-dependent demodification of cmnm(5)s(2)U34 to nm(5)s(2)U34, followed by the transfer of a methyl group from S-adenosyl-L-methionine to nm(5)s(2)U34, to form mnm(5)s(2)U34. In Vibrio cholerae serotype O1 (strain ATCC 39315 / El Tor Inaba N16961), this protein is tRNA 5-methylaminomethyl-2-thiouridine biosynthesis bifunctional protein MnmC.